The sequence spans 415 residues: Gamma-glutamyl phosphate reductase (415 aa).

Belongs to the gamma-glutamyl phosphate reductase family.

The protein localises to the cytoplasm. It carries out the reaction L-glutamate 5-semialdehyde + phosphate + NADP(+) = L-glutamyl 5-phosphate + NADPH + H(+). It functions in the pathway amino-acid biosynthesis; L-proline biosynthesis; L-glutamate 5-semialdehyde from L-glutamate: step 2/2. Its function is as follows. Catalyzes the NADPH-dependent reduction of L-glutamate 5-phosphate into L-glutamate 5-semialdehyde and phosphate. The product spontaneously undergoes cyclization to form 1-pyrroline-5-carboxylate. This Psychromonas ingrahamii (strain DSM 17664 / CCUG 51855 / 37) protein is Gamma-glutamyl phosphate reductase.